A 537-amino-acid polypeptide reads, in one-letter code: Glucocorticoid-induced transcript 1 protein (537 aa).

Disordered stretches follow at residues 1–45 (MSTA…APAA) and 62–254 (LLRG…HGNH). Serine 69, serine 96, serine 98, and serine 99 each carry phosphoserine. Positions 69-86 (SPTRPAAAATAAAALGSL) are enriched in low complexity. Residues 97 to 106 (PSSPTPPPAA) show a composition bias toward pro residues. Position 101 is a phosphothreonine (threonine 101). Positions 121-136 (RSPESRRRSSSPERRS) are enriched in basic and acidic residues. Positions 152–168 (IRTSSTIRRTSSLDTIT) are enriched in low complexity. Phosphoserine occurs at positions 162 and 163. 2 positions are modified to phosphothreonine: threonine 166 and threonine 168. Over residues 178-192 (RDPHVHYPSCMRDKA) the composition is skewed to basic and acidic residues. At serine 214 the chain carries Phosphoserine. Residues 217–244 (SADQLKEIAKLRQQLQRSKQSSRHSKEK) adopt a coiled-coil conformation. Serine 248 is modified (phosphoserine). At threonine 256 the chain carries Phosphothreonine. Residue serine 293 is modified to Phosphoserine. The segment covering 309-321 (EVSKPLDIPDGRR) has biased composition (basic and acidic residues). A disordered region spans residues 309–407 (EVSKPLDIPD…KPNNSYMFKR (99 aa)). The span at 329–346 (RSSSTRSIDTQTPSVQER) shows a compositional bias: polar residues. Residue threonine 333 is modified to Phosphothreonine. Serine 335 is modified (phosphoserine). Position 340 is a phosphothreonine (threonine 340). Low complexity predominate over residues 347–359 (SSSCSSHSPCVSP). Phosphoserine is present on residues serine 384, serine 388, serine 396, serine 402, and serine 470. Residues 495–520 (SLSDDTSTADSLEPSAQQPSQQQQLL) form a disordered region.

In terms of tissue distribution, predominantly expressed in thymus and testis, especially in CD4+CD8+ cells and at specific stages of spermatogenesis.

This Mus musculus (Mouse) protein is Glucocorticoid-induced transcript 1 protein (Glcci1).